We begin with the raw amino-acid sequence, 212 residues long: Ferric nitrobindin-like protein (212 aa).

Residues 1 to 11 (MTSSDQPERGS) are compositionally biased toward basic and acidic residues. The interval 1 to 36 (MTSSDQPERGSGDAAVQAAAERAEQTRGRNVPQFDD) is disordered. The short motif at 64 to 70 (GVWRGDG) is the GXWXGXG element.

This sequence belongs to the nitrobindin family.

The chain is Ferric nitrobindin-like protein from Saccharopolyspora erythraea (strain ATCC 11635 / DSM 40517 / JCM 4748 / NBRC 13426 / NCIMB 8594 / NRRL 2338).